Here is a 97-residue protein sequence, read N- to C-terminus: Mapk-regulated corepressor-interacting protein 1 (97 aa).

Residues 1–26 show a composition bias toward polar residues; the sequence is MTSSSTPRMHTYKRTSSPRSPTNTGE. 2 disordered regions span residues 1–27 and 54–97; these read MTSS…TGEL and QNHE…SKKS. Composition is skewed to basic and acidic residues over residues 54–68 and 84–97; these read QNHE…EYVE and SDLK…SKKS. The short motif at 80 to 84 is the PXDLS motif element; it reads PVDLS.

It belongs to the MCRIP family.

The protein localises to the nucleus. The protein resides in the cytoplasm. Its subcellular location is the stress granule. In terms of biological role, may play a role in the regulation of the epithelial-mesenchymal transition. The chain is Mapk-regulated corepressor-interacting protein 1 (mcrip1) from Danio rerio (Zebrafish).